Here is a 572-residue protein sequence, read N- to C-terminus: Methionine--tRNA ligase (572 aa).

The short motif at 11-21 (PYINGVKHLGN) is the 'HIGH' region element. Cysteine 143, cysteine 146, cysteine 156, and cysteine 159 together coordinate Zn(2+). Positions 341 to 345 (KFSTS) match the 'KMSKS' region motif. Position 344 (threonine 344) interacts with ATP.

The protein belongs to the class-I aminoacyl-tRNA synthetase family. MetG type 1 subfamily. In terms of assembly, monomer. Requires Zn(2+) as cofactor.

It is found in the cytoplasm. The catalysed reaction is tRNA(Met) + L-methionine + ATP = L-methionyl-tRNA(Met) + AMP + diphosphate. Functionally, is required not only for elongation of protein synthesis but also for the initiation of all mRNA translation through initiator tRNA(fMet) aminoacylation. The sequence is that of Methionine--tRNA ligase from Maricaulis maris (strain MCS10) (Caulobacter maris).